Consider the following 261-residue polypeptide: ATP synthase subunit a (261 aa).

5 helical membrane passes run 28-48 (AVHL…LTIF), 89-109 (IAPL…MDWV), 140-160 (NITF…SIKV), 203-223 (LFGN…IGVF), and 229-249 (FLWA…FMML).

This sequence belongs to the ATPase A chain family. F-type ATPases have 2 components, CF(1) - the catalytic core - and CF(0) - the membrane proton channel. CF(1) has five subunits: alpha(3), beta(3), gamma(1), delta(1), epsilon(1). CF(0) has three main subunits: a(1), b(2) and c(9-12). The alpha and beta chains form an alternating ring which encloses part of the gamma chain. CF(1) is attached to CF(0) by a central stalk formed by the gamma and epsilon chains, while a peripheral stalk is formed by the delta and b chains.

The protein resides in the cell inner membrane. Key component of the proton channel; it plays a direct role in the translocation of protons across the membrane. The chain is ATP synthase subunit a from Colwellia psychrerythraea (strain 34H / ATCC BAA-681) (Vibrio psychroerythus).